A 1029-amino-acid polypeptide reads, in one-letter code: Huntingtin-interacting protein 1 (1029 aa).

The 129-residue stretch at 32 to 160 folds into the ENTH domain; it reads ERESFERTQT…EYHTKNPRFP (129 aa). S338 carries the phosphoserine modification. A coiled-coil region spans residues 375-636; the sequence is HLIERLYREI…IQEALSQLEE (262 aa). The interval 410-491 is pDED; sequence SELEAELAEQ…HADLLRKNAE (82 aa). The region spanning 763-1004 is the I/LWEQ domain; that stretch reads GLDIKQEELG…ELRKKHYELA (242 aa). The segment at 859–916 is important for actin binding; the sequence is RWTEGLISASKAVGWGATIMVDAADLVVQGKGKFEELMVCSREIAASTAQLVAASKVK. The tract at residues 1009–1029 is disordered; the sequence is GWEEGTEASPSTVQEAIPDKE.

It belongs to the SLA2 family. Homodimer. Binds actin. Binds HTT (via N-terminus). This interaction is restricted to the brain. Binds to IFT57. In normal conditions, it poorly interacts with IFT57, HIP1 being strongly associated with HTT. However, in mutant HTT proteins with a long poly-Gln region, interaction between HTT and HIP1 is inhibited, promoting the interaction between HIP1 and IFT57. Interacts with CLTB (via N-terminus). Interacts (via coiled coil domain) with AR. Interacts with AP2A1, AP2A2, CLTC and HIP1R. Interacts with GRIA1, GRIN2A and GRIN2B. In terms of tissue distribution, most abundantly expressed in brain. In brain, expressed in cortical tissue, hippocampus, the molecular layer of the cerebellum and olfactory bulb. Also expressed in spinal cord and bone marrow (at protein level). Expressed in reproductive tissues.

Its subcellular location is the cytoplasm. The protein localises to the nucleus. It is found in the endomembrane system. The protein resides in the cytoplasmic vesicle. It localises to the clathrin-coated vesicle membrane. Its function is as follows. Plays a role in clathrin-mediated endocytosis and trafficking. Involved in regulating AMPA receptor trafficking in the central nervous system in an NMDA-dependent manner. Regulates presynaptic nerve terminal activity. Enhances androgen receptor (AR)-mediated transcription. May act as a proapoptotic protein that induces cell death by acting through the intrinsic apoptosis pathway. Binds 3-phosphoinositides (via ENTH domain). May act through the ENTH domain to promote cell survival by stabilizing receptor tyrosine kinases following ligand-induced endocytosis. May play a functional role in the cell filament networks. May be required for differentiation, proliferation, and/or survival of somatic and germline progenitors. In Mus musculus (Mouse), this protein is Huntingtin-interacting protein 1.